Here is a 101-residue protein sequence, read N- to C-terminus: uncharacterized protein (101 aa).

It localises to the mitochondrion. This is an uncharacterized protein from Arabidopsis thaliana (Mouse-ear cress).